The chain runs to 294 residues: 4-hydroxy-tetrahydrodipicolinate synthase (294 aa).

Thr45 lines the pyruvate pocket. Tyr133 (proton donor/acceptor) is an active-site residue. Catalysis depends on Lys161, which acts as the Schiff-base intermediate with substrate. Ile203 contributes to the pyruvate binding site.

The protein belongs to the DapA family. Homotetramer; dimer of dimers.

It localises to the cytoplasm. It carries out the reaction L-aspartate 4-semialdehyde + pyruvate = (2S,4S)-4-hydroxy-2,3,4,5-tetrahydrodipicolinate + H2O + H(+). The protein operates within amino-acid biosynthesis; L-lysine biosynthesis via DAP pathway; (S)-tetrahydrodipicolinate from L-aspartate: step 3/4. Its function is as follows. Catalyzes the condensation of (S)-aspartate-beta-semialdehyde [(S)-ASA] and pyruvate to 4-hydroxy-tetrahydrodipicolinate (HTPA). The polypeptide is 4-hydroxy-tetrahydrodipicolinate synthase (Buchnera aphidicola subsp. Acyrthosiphon pisum (strain APS) (Acyrthosiphon pisum symbiotic bacterium)).